The primary structure comprises 313 residues: Ribosomal RNA small subunit methyltransferase H (313 aa).

S-adenosyl-L-methionine is bound by residues 35–37 (GGH), D55, F80, D102, and Q109.

Belongs to the methyltransferase superfamily. RsmH family.

The protein resides in the cytoplasm. It catalyses the reaction cytidine(1402) in 16S rRNA + S-adenosyl-L-methionine = N(4)-methylcytidine(1402) in 16S rRNA + S-adenosyl-L-homocysteine + H(+). Functionally, specifically methylates the N4 position of cytidine in position 1402 (C1402) of 16S rRNA. The chain is Ribosomal RNA small subunit methyltransferase H from Shewanella denitrificans (strain OS217 / ATCC BAA-1090 / DSM 15013).